The sequence spans 292 residues: Homoserine kinase (292 aa).

84 to 94 (PLSRGLGSSSA) contributes to the ATP binding site.

This sequence belongs to the GHMP kinase family. Homoserine kinase subfamily.

The protein localises to the cytoplasm. It catalyses the reaction L-homoserine + ATP = O-phospho-L-homoserine + ADP + H(+). The protein operates within amino-acid biosynthesis; L-threonine biosynthesis; L-threonine from L-aspartate: step 4/5. Functionally, catalyzes the ATP-dependent phosphorylation of L-homoserine to L-homoserine phosphate. In Campylobacter jejuni subsp. doylei (strain ATCC BAA-1458 / RM4099 / 269.97), this protein is Homoserine kinase.